A 145-amino-acid chain; its full sequence is Large ribosomal subunit protein uL11 (145 aa).

The protein belongs to the universal ribosomal protein uL11 family. In terms of assembly, part of the ribosomal stalk of the 50S ribosomal subunit. Interacts with L10 and the large rRNA to form the base of the stalk. L10 forms an elongated spine to which L12 dimers bind in a sequential fashion forming a multimeric L10(L12)X complex. One or more lysine residues are methylated.

Functionally, forms part of the ribosomal stalk which helps the ribosome interact with GTP-bound translation factors. The polypeptide is Large ribosomal subunit protein uL11 (Rubrobacter xylanophilus (strain DSM 9941 / JCM 11954 / NBRC 16129 / PRD-1)).